Consider the following 80-residue polypeptide: Conotoxin Cl11.2 (80 aa).

A signal peptide spans 1 to 19 (MKMSVTFLLILMILPLFTG). Residues 20 to 41 (EWQSGSRLSALKKRLLEKRLLQ) constitute a propeptide that is removed on maturation. 4 disulfides stabilise this stretch: Cys-45–Cys-59, Cys-52–Cys-63, Cys-58–Cys-68, and Cys-62–Cys-74.

The protein belongs to the conotoxin I1 superfamily. Expressed by the venom duct.

It is found in the secreted. The chain is Conotoxin Cl11.2 from Californiconus californicus (California cone).